A 66-amino-acid polypeptide reads, in one-letter code: Large ribosomal subunit protein bL35 (66 aa).

Residues 1–22 (MAYKLKSHRGAAKRFKKTASGG) form a disordered region.

It belongs to the bacterial ribosomal protein bL35 family.

The sequence is that of Large ribosomal subunit protein bL35 from Pseudoalteromonas translucida (strain TAC 125).